Here is a 1007-residue protein sequence, read N- to C-terminus: Rho-type GTPase-activating protein 1 (1007 aa).

2 LIM zinc-binding domains span residues 13 to 66 (CVRC…CFDC) and 70 to 122 (CKNC…CLSC). Disordered regions lie at residues 203 to 293 (ITGY…KSPS), 401 to 478 (EKYS…STSL), and 505 to 600 (KETA…NDPS). Over residues 212-221 (NSGSSKFGSN) the composition is skewed to low complexity. 2 stretches are compositionally biased toward polar residues: residues 250–261 (ANMSLNVATDPT) and 270–293 (HSRNLLNKTPLRNSSGQYLAKSPS). A Phosphothreonine modification is found at threonine 278. Residue serine 291 is modified to Phosphoserine. The span at 411 to 421 (KGRKISRSLSR) shows a compositional bias: basic residues. The segment covering 454–466 (RSQDLMRDNDSHT) has biased composition (basic and acidic residues). Composition is skewed to polar residues over residues 467–478 (GLDTPNSNSTSL) and 529–579 (SPAT…LENS). Threonine 532 carries the post-translational modification Phosphothreonine. Positions 583–600 (EEQKETLYENSESRNDPS) are enriched in basic and acidic residues. One can recognise a Rho-GAP domain in the interval 791-1006 (SSLVARCNYE…FIFGNYKDIL (216 aa)).

In terms of biological role, GTPase-activating protein (GAP) for CDC42 and/or RHO1. Negative regulator of the pheromone-response pathway through the STE20 protein kinase; acts at a step between the G-protein and the MAP kinase module. Dominant suppressor of bud emergence defect caused by deletion of IPL2/BEM2. Involved in the control of polarized cell growth and proper bud site selection. This is Rho-type GTPase-activating protein 1 (RGA1) from Saccharomyces cerevisiae (strain ATCC 204508 / S288c) (Baker's yeast).